Reading from the N-terminus, the 89-residue chain is MSLNAETKAAIVAEYAQSEGDTGSPEVQVALLTASINHLQGHFANHKHDHHSRRGLLRMVSSRRKLLDYLKGKNLARYQDLIKRLGLRR.

Belongs to the universal ribosomal protein uS15 family. In terms of assembly, part of the 30S ribosomal subunit. Forms a bridge to the 50S subunit in the 70S ribosome, contacting the 23S rRNA.

In terms of biological role, one of the primary rRNA binding proteins, it binds directly to 16S rRNA where it helps nucleate assembly of the platform of the 30S subunit by binding and bridging several RNA helices of the 16S rRNA. Functionally, forms an intersubunit bridge (bridge B4) with the 23S rRNA of the 50S subunit in the ribosome. This is Small ribosomal subunit protein uS15 from Aliivibrio fischeri (strain ATCC 700601 / ES114) (Vibrio fischeri).